We begin with the raw amino-acid sequence, 207 residues long: ATP-dependent Clp protease proteolytic subunit (207 aa).

The active-site Nucleophile is serine 111. Residue histidine 136 is part of the active site.

It belongs to the peptidase S14 family. In terms of assembly, fourteen ClpP subunits assemble into 2 heptameric rings which stack back to back to give a disk-like structure with a central cavity, resembling the structure of eukaryotic proteasomes.

It localises to the cytoplasm. The catalysed reaction is Hydrolysis of proteins to small peptides in the presence of ATP and magnesium. alpha-casein is the usual test substrate. In the absence of ATP, only oligopeptides shorter than five residues are hydrolyzed (such as succinyl-Leu-Tyr-|-NHMec, and Leu-Tyr-Leu-|-Tyr-Trp, in which cleavage of the -Tyr-|-Leu- and -Tyr-|-Trp bonds also occurs).. Functionally, cleaves peptides in various proteins in a process that requires ATP hydrolysis. Has a chymotrypsin-like activity. Plays a major role in the degradation of misfolded proteins. The protein is ATP-dependent Clp protease proteolytic subunit of Aliivibrio salmonicida (strain LFI1238) (Vibrio salmonicida (strain LFI1238)).